Reading from the N-terminus, the 2541-residue chain is Highly reducing polyketide synthase otaA (2541 aa).

Residues 9-431 (SEPLAIIGLA…GTNAHVVLED (423 aa)) form the Ketosynthase family 3 (KS3) domain. Catalysis depends on for beta-ketoacyl synthase activity residues C182, H317, and H355. The 318-residue stretch at 571 to 888 (FIFTGQGANW…GSLLKRYETD (318 aa)) folds into the Malonyl-CoA:ACP transacylase (MAT) domain. The tract at residues 957 to 1092 (HELLGVPVED…GSVRVETGPH (136 aa)) is N-terminal hotdog fold. Residues 957–1251 (HELLGVPVED…GLDLVQLPPS (295 aa)) form a dehydratase (DH) domain region. The PKS/mFAS DH domain maps to 957–1254 (HELLGVPVED…LVQLPPSEDA (298 aa)). Positions 1108 to 1254 (TESVDIAQMY…LVQLPPSEDA (147 aa)) are C-terminal hotdog fold. Residues I1420 and E1442 each contribute to the S-adenosyl-L-methionine site. The methyltransferase (CMeT) domain stretch occupies residues 1433-1605 (HAQTGIKVLE…DQELRNAGLQ (173 aa)). Residues 1838–2141 (HQPNGFHFVE…RQGNAGPWVL (304 aa)) enclose the Enoyl reductase (ER) domain. Residues 2165 to 2344 (ASYLLIGGFG…PATSISLGSV (180 aa)) enclose the Ketoreductase (KR) domain. The region spanning 2453–2530 (DAVELVTRAI…QLAQQAAGGS (78 aa)) is the Carrier domain. S2490 carries the post-translational modification O-(pantetheine 4'-phosphoryl)serine.

Pantetheine 4'-phosphate serves as cofactor.

The catalysed reaction is 4 malonyl-CoA + acetyl-CoA + 5 NADPH + 9 H(+) = 7-methylmellein + 3 CO2 + 5 NADP(+) + 5 CoA + 4 H2O. The protein operates within mycotoxin biosynthesis. Its function is as follows. Highly reducing polyketide synthase; part of the gene cluster that mediates the biosynthesis of ochratoxin A (OTA), a mycotoxin composed of a chlorinated type I polyketide dihydroisocoumarin moiety linked to L-phenylalanine, and demonstrated to have nephrotoxic, immunotoxic, genotoxic, neurotoxic, and teratogenic properties. OtaA catalyzes the condensation of one acetate and 4 malonate units to form the isocoumarin group. The pathway begins with the highly reducing polyketide synthase otaA that catalyzes the formation of the isocoumarin group during the initial stages of biosynthesis, starting from one acetate and 4 malonate units, to originate the characteristic pentaketide skeleton 7-methylmellein (7-MM) of the OTA molecule. The newly identified cyclase otaY might be involved in the polyketide cyclization reaction during the initial steps of the OTA biosynthesis. 7-MM is then oxidized into 7-carboxymellein (also called ochratoxin beta) by the cytochrome P450 monooxygenase otaC. The NRPS encoded by the otaB gene is involved in the linking of phenylalanine to the dihydroisocoumarin ring. The reaction catalyzed by NRPS results in the production of ochratoxin B (OTB), which is the non-chlorinated analog of OTA and which subsequently serves as the substrate of the halogenase otaD for chlorination activity to form the final molecular structure of OTA, containing a chlorine atom in the C-5 position of the molecule. This is Highly reducing polyketide synthase otaA from Aspergillus carbonarius (strain ITEM 5010).